Here is a 141-residue protein sequence, read N- to C-terminus: Hemoglobin subunit alpha (141 aa).

A Globin domain is found at 1–141 (VLSPADKTNV…VSTVLTSKYR (141 aa)). A Phosphoserine modification is found at S3. Position 7 is an N6-succinyllysine (K7). Phosphothreonine is present on T8. The residue at position 11 (K11) is an N6-succinyllysine. K16 carries the post-translational modification N6-acetyllysine; alternate. Position 16 is an N6-succinyllysine; alternate (K16). Residue Y24 is modified to Phosphotyrosine. Position 40 is an N6-succinyllysine (K40). H58 contacts O2. A heme b-binding site is contributed by H87. A Phosphoserine modification is found at S102. T108 bears the Phosphothreonine mark. S124 and S131 each carry phosphoserine. T134 and T137 each carry phosphothreonine. The residue at position 138 (S138) is a Phosphoserine.

It belongs to the globin family. Heterotetramer of two alpha chains and two beta chains. As to expression, red blood cells.

Involved in oxygen transport from the lung to the various peripheral tissues. In terms of biological role, hemopressin acts as an antagonist peptide of the cannabinoid receptor CNR1. Hemopressin-binding efficiently blocks cannabinoid receptor CNR1 and subsequent signaling. The sequence is that of Hemoglobin subunit alpha (HBA) from Tursiops truncatus (Atlantic bottle-nosed dolphin).